The chain runs to 413 residues: 1-acylglycerol-3-phosphate O-acyltransferase Pnpla3 (413 aa).

At 1–42 the chain is on the cytoplasmic side; sequence MYDPERRWSLSFAGCGFLGFYHVGATLCLSERAPHLLRDART. The region spanning 10–179 is the PNPLA domain; that stretch reads LSFAGCGFLG…SDNVPVLDAK (170 aa). The GXGXXG motif lies at 14–19; the sequence is GCGFLG. A helical; Signal-anchor for type II membrane protein membrane pass occupies residues 43 to 63; the sequence is FFGCSAGALHAVTFVCSLPLG. Positions 45-49 match the GXSXG motif; it reads GCSAG. Ser-47 acts as the Nucleophile in catalysis. Residues 64–413 are Lumenal-facing; the sequence is RIMEILMDLV…HKPQGNSAGL (350 aa). Asp-166 functions as the Proton acceptor in the catalytic mechanism. The short motif at 166-168 is the DGA/G element; the sequence is DGG. 2 N-linked (GlcNAc...) asparagine glycosylation sites follow: Asn-206 and Asn-209. Positions 389 to 413 are disordered; that stretch reads KDDHRMLKHGHHPSPHKPQGNSAGL. Over residues 394-403 the composition is skewed to basic residues; it reads MLKHGHHPSP.

As to expression, restricted to adipose tissue. Expressed in inguinal and epididymal white adipose tissues and in interscapular brown adipose tissue. Also expressed in liver in response to high-sucrose diet.

It localises to the membrane. It is found in the lipid droplet. It catalyses the reaction a 1-acyl-sn-glycero-3-phosphate + an acyl-CoA = a 1,2-diacyl-sn-glycero-3-phosphate + CoA. The catalysed reaction is a triacylglycerol + H2O = a diacylglycerol + a fatty acid + H(+). It carries out the reaction a 1-acylglycerol + a 1,3-diacylglycerol = a triacylglycerol + glycerol. The enzyme catalyses a 1-acylglycerol + a 1,2-diacylglycerol = a triacylglycerol + glycerol. It catalyses the reaction 2 a 1-acylglycerol = a 1,2-diacylglycerol + glycerol. The catalysed reaction is 1-(9Z-octadecenoyl)-sn-glycero-3-phosphate + (9Z)-octadecenoyl-CoA = 1,2-di-(9Z-octadecenoyl)-sn-glycero-3-phosphate + CoA. It carries out the reaction 1-(9Z-octadecenoyl)-sn-glycero-3-phosphate + hexadecanoyl-CoA = 1-(9Z)-octadecenoyl-2-hexadecanoyl-sn-glycero-3-phosphate + CoA. The enzyme catalyses 1-(9Z-octadecenoyl)-sn-glycero-3-phosphate + (9Z,12Z)-octadecadienoyl-CoA = 1-(9Z)-octadecenoyl-2-(9Z,12Z)-octadecadienoyl-sn-glycero-3-phosphate + CoA. It catalyses the reaction 1-(9Z-octadecenoyl)-sn-glycero-3-phosphate + (5Z,8Z,11Z,14Z)-eicosatetraenoyl-CoA = 1-(9Z)-octadecenoyl-2-(5Z,8Z,11Z,14Z)-eicosatetraenoyl-sn-glycero-3-phosphate + CoA. The catalysed reaction is 2 1-(9Z-octadecenoyl)-glycerol = 1,2-di-(9Z-octadecenoyl)-glycerol + glycerol. It carries out the reaction 1-(9Z-octadecenoyl)-glycerol + 1,2-di-(9Z-octadecenoyl)-glycerol = 1,2,3-tri-(9Z-octadecenoyl)-glycerol + glycerol. The enzyme catalyses 1-(9Z-octadecenoyl)-glycerol + 1,3-di-(9Z-octadecenoyl)-glycerol = 1,2,3-tri-(9Z-octadecenoyl)-glycerol + glycerol. It catalyses the reaction 1,2,3-tri-(9Z-octadecenoyl)-glycerol + H2O = 1,3-di-(9Z-octadecenoyl)-glycerol + (9Z)-octadecenoate + H(+). The catalysed reaction is a 1,2-diacyl-sn-glycero-3-phosphocholine + H2O = a 1-acyl-sn-glycero-3-phosphocholine + a fatty acid + H(+). It participates in phospholipid metabolism. It functions in the pathway glycerolipid metabolism. Functionally, specifically catalyzes coenzyme A (CoA)-dependent acylation of 1-acyl-sn-glycerol 3-phosphate (2-lysophosphatidic acid/LPA) to generate phosphatidic acid (PA), an important metabolic intermediate and precursor for both triglycerides and glycerophospholipids. Does not esterify other lysophospholipids. Acyl donors are long chain (at least C16) fatty acyl-CoAs: arachidonoyl-CoA, linoleoyl-CoA, oleoyl-CoA and at a lesser extent palmitoyl-CoA. Additionally possesses low triacylglycerol lipase and CoA-independent acylglycerol transacylase activities and thus may play a role in acyl-chain remodeling of triglycerides. In vitro may express hydrolytic activity against glycerolipids triacylglycerol, diacylglycerol and monoacylglycerol, with a strong preference for oleic acid as the acyl moiety. However, the triacylglycerol hydrolase activity is controversial and may be very low. Possesses phospholipase A2 activity. In Mus musculus (Mouse), this protein is 1-acylglycerol-3-phosphate O-acyltransferase Pnpla3.